The following is a 111-amino-acid chain: Nucleoid-associated protein Cphamn1_1179 (111 aa).

Belongs to the YbaB/EbfC family. In terms of assembly, homodimer.

The protein resides in the cytoplasm. It localises to the nucleoid. Functionally, binds to DNA and alters its conformation. May be involved in regulation of gene expression, nucleoid organization and DNA protection. This Chlorobium phaeobacteroides (strain BS1) protein is Nucleoid-associated protein Cphamn1_1179.